Here is a 283-residue protein sequence, read N- to C-terminus: MSSGATPAAVKIGIIGGTGLDDPEILEGRTEKYVDTPFGKPSDALVLGKIKNVDCVLLARHGRQHTIMPSKVNYQANIWALKEEGCTHVIVTTACGSLKEEIQPGDIIIIDQFIDRTTRRLQTFYDGNHSCARGVCHIPMAEPFCPKTREVLIETAKKLGLRCHSKGTMITIEGPRFSSRAESIMFQTWGADVINMTTVPEVVLAKEAGICYASIAMATDYDCWKEHEEAVSVDRVLKTLKENANKAKSLLLTTIPQIGSMEWSETLHNMKKMAQFSVLLPRH.

A phosphate-binding site is contributed by Thr-18. Lys-51 carries the post-translational modification N6-acetyllysine. Residues 60–61 and 93–94 each bind phosphate; these read RH and TA. Met-196 serves as a coordination point for substrate. Thr-197 lines the phosphate pocket. A substrate-binding site is contributed by 220–222; sequence DYD.

It belongs to the PNP/MTAP phosphorylase family. MTAP subfamily. As to quaternary structure, homotrimer.

Its subcellular location is the cytoplasm. The protein localises to the nucleus. It carries out the reaction S-methyl-5'-thioadenosine + phosphate = 5-(methylsulfanyl)-alpha-D-ribose 1-phosphate + adenine. Its pathway is amino-acid biosynthesis; L-methionine biosynthesis via salvage pathway; S-methyl-5-thio-alpha-D-ribose 1-phosphate from S-methyl-5'-thioadenosine (phosphorylase route): step 1/1. In terms of biological role, catalyzes the reversible phosphorylation of S-methyl-5'-thioadenosine (MTA) to adenine and 5-methylthioribose-1-phosphate. Involved in the breakdown of MTA, a major by-product of polyamine biosynthesis. Responsible for the first step in the methionine salvage pathway after MTA has been generated from S-adenosylmethionine. Has broad substrate specificity with 6-aminopurine nucleosides as preferred substrates. This chain is S-methyl-5'-thioadenosine phosphorylase, found in Bos taurus (Bovine).